A 473-amino-acid polypeptide reads, in one-letter code: Argininosuccinate lyase (473 aa).

This sequence belongs to the lyase 1 family. Argininosuccinate lyase subfamily.

It is found in the cytoplasm. The catalysed reaction is 2-(N(omega)-L-arginino)succinate = fumarate + L-arginine. Its pathway is amino-acid biosynthesis; L-arginine biosynthesis; L-arginine from L-ornithine and carbamoyl phosphate: step 3/3. This is Argininosuccinate lyase from Streptomyces clavuligerus.